The primary structure comprises 98 residues: Putative defensin-like protein 239 (98 aa).

Positions 1–23 (MRYTTSFIGLCFLIFLLKNLVNG) are cleaved as a signal peptide. Intrachain disulfides connect Cys-29-Cys-89, Cys-39-Cys-69, Cys-47-Cys-86, and Cys-67-Cys-88.

This sequence belongs to the DEFL family.

It localises to the secreted. The sequence is that of Putative defensin-like protein 239 (SCRL17) from Arabidopsis thaliana (Mouse-ear cress).